A 295-amino-acid polypeptide reads, in one-letter code: tRNA pseudouridine synthase B (295 aa).

Catalysis depends on Asp42, which acts as the Nucleophile.

It belongs to the pseudouridine synthase TruB family. Type 1 subfamily.

It catalyses the reaction uridine(55) in tRNA = pseudouridine(55) in tRNA. Responsible for synthesis of pseudouridine from uracil-55 in the psi GC loop of transfer RNAs. This chain is tRNA pseudouridine synthase B, found in Cutibacterium acnes (strain DSM 16379 / KPA171202) (Propionibacterium acnes).